A 414-amino-acid chain; its full sequence is Probable indole-3-pyruvate monooxygenase YUCCA1 (414 aa).

25-30 (GAGPSG) serves as a coordination point for FAD. 189–194 (GCGNSG) contacts NADP(+).

This sequence belongs to the FMO family. The cofactor is FAD. Expressed in the apical meristems and young floral primordia. Detected in the floral meristems and at the base of the floral organs.

It catalyses the reaction indole-3-pyruvate + NADPH + O2 + H(+) = (indol-3-yl)acetate + CO2 + NADP(+) + H2O. The protein operates within plant hormone metabolism; auxin biosynthesis. Its function is as follows. Involved in auxin biosynthesis, but not in the tryptamine or the CYP79B2/B3 branches. Catalyzes in vitro the N-oxidation of tryptamine to form N-hydroxyl tryptamine. Involved during embryogenesis and seedling development. Required for the formation of floral organs and vascular tissues. Belongs to the set of redundant YUCCA genes probably responsible for auxin biosynthesis in shoots. The polypeptide is Probable indole-3-pyruvate monooxygenase YUCCA1 (YUC1) (Arabidopsis thaliana (Mouse-ear cress)).